Consider the following 474-residue polypeptide: Bifunctional protein HldE (474 aa).

Positions 1-317 (MKLSMPRFDQ…RRAIQRSEGS (317 aa)) are ribokinase. Residue 194–197 (NLSE) participates in ATP binding. Residue Asp-263 is part of the active site. The cytidylyltransferase stretch occupies residues 343 to 474 (FTNGCFDILH…AIVEKIRNNE (132 aa)).

It in the N-terminal section; belongs to the carbohydrate kinase PfkB family. This sequence in the C-terminal section; belongs to the cytidylyltransferase family. As to quaternary structure, homodimer.

The enzyme catalyses D-glycero-beta-D-manno-heptose 7-phosphate + ATP = D-glycero-beta-D-manno-heptose 1,7-bisphosphate + ADP + H(+). It catalyses the reaction D-glycero-beta-D-manno-heptose 1-phosphate + ATP + H(+) = ADP-D-glycero-beta-D-manno-heptose + diphosphate. It participates in nucleotide-sugar biosynthesis; ADP-L-glycero-beta-D-manno-heptose biosynthesis; ADP-L-glycero-beta-D-manno-heptose from D-glycero-beta-D-manno-heptose 7-phosphate: step 1/4. The protein operates within nucleotide-sugar biosynthesis; ADP-L-glycero-beta-D-manno-heptose biosynthesis; ADP-L-glycero-beta-D-manno-heptose from D-glycero-beta-D-manno-heptose 7-phosphate: step 3/4. In terms of biological role, catalyzes the phosphorylation of D-glycero-D-manno-heptose 7-phosphate at the C-1 position to selectively form D-glycero-beta-D-manno-heptose-1,7-bisphosphate. Catalyzes the ADP transfer from ATP to D-glycero-beta-D-manno-heptose 1-phosphate, yielding ADP-D-glycero-beta-D-manno-heptose. This chain is Bifunctional protein HldE, found in Pseudomonas fluorescens (strain SBW25).